Reading from the N-terminus, the 305-residue chain is Transmembrane epididymal protein 1 (305 aa).

A helical transmembrane segment spans residues 4 to 24; that stretch reads FIGHISPGLFLVFYGLYQAII. The N-linked (GlcNAc...) asparagine glycan is linked to Asn-32. 6 helical membrane passes run 51–71, 100–120, 124–144, 159–179, 187–207, and 223–243; these read LWQI…LIVY, LTMF…RSVL, LVLL…LLLV, SLLI…LWAP, IETF…FILF, and IMLV…CMLG. Residues 285–305 are disordered; sequence EQQDRDDQAPLLSKSSPCDRA.

This sequence belongs to the TMEM45 family.

The protein resides in the membrane. This is Transmembrane epididymal protein 1 (Teddm1) from Rattus norvegicus (Rat).